Reading from the N-terminus, the 196-residue chain is Adenylate kinase (196 aa).

Gly9 to Thr17 provides a ligand contact to ATP.

The protein belongs to the archaeal adenylate kinase family.

The protein resides in the cytoplasm. The enzyme catalyses AMP + ATP = 2 ADP. The sequence is that of Adenylate kinase (adkA) from Pyrococcus abyssi (strain GE5 / Orsay).